Here is a 145-residue protein sequence, read N- to C-terminus: Holo-[acyl-carrier-protein] synthase (145 aa).

Mg(2+) contacts are provided by aspartate 8 and glutamate 59.

This sequence belongs to the P-Pant transferase superfamily. AcpS family. The cofactor is Mg(2+).

It is found in the cytoplasm. It carries out the reaction apo-[ACP] + CoA = holo-[ACP] + adenosine 3',5'-bisphosphate + H(+). Transfers the 4'-phosphopantetheine moiety from coenzyme A to a Ser of acyl-carrier-protein. This chain is Holo-[acyl-carrier-protein] synthase, found in Granulibacter bethesdensis (strain ATCC BAA-1260 / CGDNIH1).